The primary structure comprises 332 residues: Serpentine receptor class gamma-3 (332 aa).

The next 7 membrane-spanning stretches (helical) occupy residues 23 to 43 (FAYL…IWVS), 72 to 92 (LIFT…SEIV), 101 to 121 (IYYC…IFIA), 144 to 164 (IMLI…LISD), 184 to 204 (WASL…ITMV), 231 to 251 (AALI…FAFF), and 263 to 283 (YLRF…LLLV).

It belongs to the nematode receptor-like protein srg family.

It is found in the membrane. The chain is Serpentine receptor class gamma-3 (srg-3) from Caenorhabditis elegans.